The sequence spans 349 residues: Small ribosomal subunit protein eS6 (349 aa).

The tract at residues 224–349 is disordered; sequence RRRSRLSSMR…AKKEKKQKKK (126 aa). Composition is skewed to basic and acidic residues over residues 231–251 and 260–334; these read SMRDSRSSIGEERDKEKEKAA and KKEA…EAAK.

It belongs to the eukaryotic ribosomal protein eS6 family. As to quaternary structure, component of the small ribosomal subunit. Part of the small subunit (SSU) processome, composed of more than 70 proteins and the RNA chaperone small nucleolar RNA (snoRNA) U3. In terms of processing, ribosomal protein S6 is the major substrate of protein kinases in eukaryote ribosomes.

It localises to the cytoplasm. It is found in the nucleus. Its subcellular location is the nucleolus. Component of the 40S small ribosomal subunit. Plays an important role in controlling cell growth and proliferation through the selective translation of particular classes of mRNA. Part of the small subunit (SSU) processome, first precursor of the small eukaryotic ribosomal subunit. During the assembly of the SSU processome in the nucleolus, many ribosome biogenesis factors, an RNA chaperone and ribosomal proteins associate with the nascent pre-rRNA and work in concert to generate RNA folding, modifications, rearrangements and cleavage as well as targeted degradation of pre-ribosomal RNA by the RNA exosome. The protein is Small ribosomal subunit protein eS6 (RpS6) of Aedes albopictus (Asian tiger mosquito).